The chain runs to 483 residues: Myosin-binding protein H (483 aa).

Positions 1-15 (MTGKATSEASVSTPE) are enriched in polar residues. The interval 1-78 (MTGKATSEAS…PEPPSEDVPS (78 aa)) is disordered. Phosphothreonine occurs at positions 2, 6, and 26. Residues 41-66 (QEQAPEPQKPQAQDPAAPAASAMPAA) show a composition bias toward low complexity. Positions 79 to 174 (APLRLTLEDV…LDQPVHIQEI (96 aa)) constitute a Fibronectin type-III 1 domain. One can recognise an Ig-like C2-type 1 domain in the interval 178 to 266 (PKIRVPRHLR…EGLEAKASID (89 aa)). The Fibronectin type-III 2 domain occupies 275–370 (PPSSIKLLDV…TKELAHIHKA (96 aa)). The 85-residue stretch at 388–472 (PSFTQPLADH…INVLGEASVD (85 aa)) folds into the Ig-like C2-type 2 domain.

Belongs to the immunoglobulin superfamily. MyBP family. In terms of tissue distribution, skeletal muscle. Expressed at low levels in heart ventricles.

Functionally, binds to myosin; probably involved in interaction with thick myofilaments in the A-band. This Mus musculus (Mouse) protein is Myosin-binding protein H (Mybph).